The chain runs to 543 residues: Probable malate:quinone oxidoreductase (543 aa).

The protein belongs to the MQO family. Requires FAD as cofactor.

The enzyme catalyses (S)-malate + a quinone = a quinol + oxaloacetate. It functions in the pathway carbohydrate metabolism; tricarboxylic acid cycle; oxaloacetate from (S)-malate (quinone route): step 1/1. The sequence is that of Probable malate:quinone oxidoreductase from Acinetobacter baylyi (strain ATCC 33305 / BD413 / ADP1).